A 341-amino-acid chain; its full sequence is Anthranilate phosphoribosyltransferase (341 aa).

Residues G84, 87–88 (GD), T92, 94–97 (NIST), 112–120 (KHGNRSVSS), and S124 contribute to the 5-phospho-alpha-D-ribose 1-diphosphate site. G84 provides a ligand contact to anthranilate. S96 lines the Mg(2+) pocket. Residue N115 coordinates anthranilate. Anthranilate is bound at residue R170. The Mg(2+) site is built by D229 and E230.

Belongs to the anthranilate phosphoribosyltransferase family. Homodimer. Requires Mg(2+) as cofactor.

It carries out the reaction N-(5-phospho-beta-D-ribosyl)anthranilate + diphosphate = 5-phospho-alpha-D-ribose 1-diphosphate + anthranilate. Its pathway is amino-acid biosynthesis; L-tryptophan biosynthesis; L-tryptophan from chorismate: step 2/5. In terms of biological role, catalyzes the transfer of the phosphoribosyl group of 5-phosphorylribose-1-pyrophosphate (PRPP) to anthranilate to yield N-(5'-phosphoribosyl)-anthranilate (PRA). The polypeptide is Anthranilate phosphoribosyltransferase (Polynucleobacter necessarius subsp. necessarius (strain STIR1)).